Reading from the N-terminus, the 156-residue chain is Nucleoredoxin-like protein 2 (156 aa).

The 139-residue stretch at 9–147 (RLVTREGTVV…LACFQNWVEA (139 aa)) folds into the Thioredoxin domain.

This sequence belongs to the nucleoredoxin family. In terms of tissue distribution, both isoforms are expressed in retina, in the photoreceptor layer, and throughout the olfactory sensory neuron layer of the nasal epithelium, in neurons. Also expressed at low levels in brain and testis.

May be involved in the maintenance of both the function and the viability of sensory neurons, including photoreceptors and olfactory neurons. In the retina, isoform 1 may be required for rod function and isoform 2 for cone viability and function. This Mus musculus (Mouse) protein is Nucleoredoxin-like protein 2 (Nxnl2).